The sequence spans 312 residues: Tyrosine recombinase XerC (312 aa).

Residues 10–101 (PDLQAARESW…GIRSLLRFLE (92 aa)) form the Core-binding (CB) domain. Residues 122-306 (SLPKPLTASD…DTARLLEIYE (185 aa)) form the Tyr recombinase domain. Catalysis depends on residues Arg165, Lys190, His258, Arg261, and His284. The active-site O-(3'-phospho-DNA)-tyrosine intermediate is Tyr293.

This sequence belongs to the 'phage' integrase family. XerC subfamily. Forms a cyclic heterotetrameric complex composed of two molecules of XerC and two molecules of XerD.

The protein localises to the cytoplasm. Its function is as follows. Site-specific tyrosine recombinase, which acts by catalyzing the cutting and rejoining of the recombining DNA molecules. The XerC-XerD complex is essential to convert dimers of the bacterial chromosome into monomers to permit their segregation at cell division. It also contributes to the segregational stability of plasmids. The chain is Tyrosine recombinase XerC from Mesorhizobium japonicum (strain LMG 29417 / CECT 9101 / MAFF 303099) (Mesorhizobium loti (strain MAFF 303099)).